A 407-amino-acid chain; its full sequence is Arginine deiminase (407 aa).

Catalysis depends on cysteine 397, which acts as the Amidino-cysteine intermediate.

This sequence belongs to the arginine deiminase family.

The protein resides in the cytoplasm. The enzyme catalyses L-arginine + H2O = L-citrulline + NH4(+). The protein operates within amino-acid degradation; L-arginine degradation via ADI pathway; carbamoyl phosphate from L-arginine: step 1/2. The protein is Arginine deiminase of Vibrio parahaemolyticus serotype O3:K6 (strain RIMD 2210633).